The sequence spans 891 residues: Alanine--tRNA ligase (891 aa).

Zn(2+) contacts are provided by histidine 574, histidine 578, cysteine 676, and histidine 680.

It belongs to the class-II aminoacyl-tRNA synthetase family. The cofactor is Zn(2+).

Its subcellular location is the cytoplasm. It carries out the reaction tRNA(Ala) + L-alanine + ATP = L-alanyl-tRNA(Ala) + AMP + diphosphate. In terms of biological role, catalyzes the attachment of alanine to tRNA(Ala) in a two-step reaction: alanine is first activated by ATP to form Ala-AMP and then transferred to the acceptor end of tRNA(Ala). Also edits incorrectly charged Ser-tRNA(Ala) and Gly-tRNA(Ala) via its editing domain. In Synechococcus sp. (strain WH7803), this protein is Alanine--tRNA ligase.